Consider the following 242-residue polypeptide: MSKGRFTPLASLRRLLLRILVVLAVFWGGGIALFSVVPVPFSAVMVERQISAWLQGDFGYVAHSDWAGMDAISPWMGLAVIAAEDQKFPEHWGFDVSAIEKALAHNERNENRIRGASTLSQQTAKNLFLWDGRSWLRKGLEAGLTVGLETVWSKKRILTVYLNIAEFGDGVFGVEAASQRYFNKPASRLSMSEAALLAAVLPNPLRFKANAPSGYVRSRQAWILRQMRQLGGESFMTRNHLY.

Residues 19–39 (ILVVLAVFWGGGIALFSVVPV) form a helical membrane-spanning segment.

This sequence belongs to the glycosyltransferase 51 family.

Its subcellular location is the cell inner membrane. It carries out the reaction [GlcNAc-(1-&gt;4)-Mur2Ac(oyl-L-Ala-gamma-D-Glu-L-Lys-D-Ala-D-Ala)](n)-di-trans,octa-cis-undecaprenyl diphosphate + beta-D-GlcNAc-(1-&gt;4)-Mur2Ac(oyl-L-Ala-gamma-D-Glu-L-Lys-D-Ala-D-Ala)-di-trans,octa-cis-undecaprenyl diphosphate = [GlcNAc-(1-&gt;4)-Mur2Ac(oyl-L-Ala-gamma-D-Glu-L-Lys-D-Ala-D-Ala)](n+1)-di-trans,octa-cis-undecaprenyl diphosphate + di-trans,octa-cis-undecaprenyl diphosphate + H(+). It participates in cell wall biogenesis; peptidoglycan biosynthesis. Functionally, peptidoglycan polymerase that catalyzes glycan chain elongation from lipid-linked precursors. The polypeptide is Biosynthetic peptidoglycan transglycosylase (Citrobacter koseri (strain ATCC BAA-895 / CDC 4225-83 / SGSC4696)).